A 141-amino-acid polypeptide reads, in one-letter code: Large ribosomal subunit protein uL11 (141 aa).

It belongs to the universal ribosomal protein uL11 family. In terms of assembly, part of the ribosomal stalk of the 50S ribosomal subunit. Interacts with L10 and the large rRNA to form the base of the stalk. L10 forms an elongated spine to which L12 dimers bind in a sequential fashion forming a multimeric L10(L12)X complex. In terms of processing, one or more lysine residues are methylated.

In terms of biological role, forms part of the ribosomal stalk which helps the ribosome interact with GTP-bound translation factors. In Chloroflexus aggregans (strain MD-66 / DSM 9485), this protein is Large ribosomal subunit protein uL11.